A 562-amino-acid chain; its full sequence is MFS-type transporter calB (562 aa).

The segment covering 1-16 (MDEVTRTAQRSPSITE) has biased composition (polar residues). The segment at 1 to 45 (MDEVTRTAQRSPSITETHAGETKLAGPGEKEGDVESPVDPSADSE) is disordered. A helical membrane pass occupies residues 57 to 77 (FAILASVTLSAFLMLLDGSII). A glycan (N-linked (GlcNAc...) asparagine) is linked at Asn-83. Transmembrane regions (helical) follow at residues 94-113 (IGWYTAAYQLASAALQPLSG), 123-143 (WTYLFFFGLFELGSLICGVAN), 154-174 (VAGLGSSGLLNGGMTIIAGAV), 184-204 (GIYLGISQLGIVCGPLIGGAL), 213-233 (CFYINLPVGAVTAILLLFLQV), 256-276 (LIGFTLFAPAAIMVLLALYYG), 284-304 (SSQVIGLFCGAGVTIIVFALW), 329-349 (INGAALVASILVAAQYLPIYF), 362-382 (VNTLPGILSQLLTVILSGVLV), 389-409 (LPFAAAGSAISAVGNGIVTLF), 418-438 (WIGYQIVLGSGRGIGMQMGII), 451-471 (VGIAFMIFCQNFAGAIFVVVG), and 530-550 (VFYLLMSLSLAGFVAAFGMGW). A glycan (N-linked (GlcNAc...) asparagine) is linked at Asn-557.

It belongs to the major facilitator superfamily. TCR/Tet family.

It is found in the cell membrane. Its function is as follows. MFS-type transporter; part of the gene cluster that mediates the biosynthesis of calbistrin A and related compounds. Calbistrin A is a secondary metabolite with an interesting structure that was recently found to have bioactivity against leukemia cells. It consists of two polyketides linked by an ester bond: a bicyclic decalin containing polyketide and a linear 12 carbon dioic acid structure. Required for the secretion of calbistrin A and calbistrin C, as well as of related compounds decumbenone A, B and C. This chain is MFS-type transporter calB, found in Penicillium decumbens.